The primary structure comprises 440 residues: MAGLEAIKYGRGRLEVLDQLRLPHEFVYDNVSTCEEAFDSIKSMRVRGAPAIAIVAALALAVELHHKKDDSKTKQETVQYINKRLDYLLGSRPTAVDLSNAIKLLKRVSQAAAETTGTNDDNAACANVRNGYIVAAEKILEDDLTTNLAIGRYGAEYLRRQQMPIGEENNDDPSKFFTTSPPCTQGAMDKTYRKLSVLTHCNTGSLATSGHGTALGIIRSLHKMNYLDHAYCTETRPYNQGSRLTAFELVYEKIPSTLITDSMAGALFARMKDIKNISAVIVGADRVARNGDTANKIGTYSLAVLAKAHNIKFIVAAPTTSIDLETASGEDIKIEDRAPTELTQISGAVVGKDGHVDVNSTARVAIAHQGINVWNPSFDVTPSMYIDAVITEKGEVVRSSQGTFDFKAIMPERWAQQVEGKEPNGKAQVDDGTLFQMENI.

The active-site Proton donor is aspartate 285.

Belongs to the eIF-2B alpha/beta/delta subunits family. MtnA subfamily.

Its subcellular location is the cytoplasm. The protein localises to the nucleus. The catalysed reaction is 5-(methylsulfanyl)-alpha-D-ribose 1-phosphate = 5-(methylsulfanyl)-D-ribulose 1-phosphate. It functions in the pathway amino-acid biosynthesis; L-methionine biosynthesis via salvage pathway; L-methionine from S-methyl-5-thio-alpha-D-ribose 1-phosphate: step 1/6. Its function is as follows. Catalyzes the interconversion of methylthioribose-1-phosphate (MTR-1-P) into methylthioribulose-1-phosphate (MTRu-1-P). The sequence is that of Methylthioribose-1-phosphate isomerase (mri1) from Botryotinia fuckeliana (strain B05.10) (Noble rot fungus).